The following is a 288-amino-acid chain: Acetyl-coenzyme A carboxylase carboxyl transferase subunit beta (288 aa).

A CoA carboxyltransferase N-terminal domain is found at 34–288 (LFAKCPACKH…HLVAFHGGGQ (255 aa)). The Zn(2+) site is built by Cys38, Cys41, Cys56, and Cys59. The segment at 38–59 (CPACKHMIYKKDLGLAKICPTC) adopts a C4-type zinc-finger fold.

The protein belongs to the AccD/PCCB family. As to quaternary structure, acetyl-CoA carboxylase is a heterohexamer composed of biotin carboxyl carrier protein (AccB), biotin carboxylase (AccC) and two subunits each of ACCase subunit alpha (AccA) and ACCase subunit beta (AccD). The cofactor is Zn(2+).

The protein localises to the cytoplasm. The enzyme catalyses N(6)-carboxybiotinyl-L-lysyl-[protein] + acetyl-CoA = N(6)-biotinyl-L-lysyl-[protein] + malonyl-CoA. It participates in lipid metabolism; malonyl-CoA biosynthesis; malonyl-CoA from acetyl-CoA: step 1/1. Functionally, component of the acetyl coenzyme A carboxylase (ACC) complex. Biotin carboxylase (BC) catalyzes the carboxylation of biotin on its carrier protein (BCCP) and then the CO(2) group is transferred by the transcarboxylase to acetyl-CoA to form malonyl-CoA. The chain is Acetyl-coenzyme A carboxylase carboxyl transferase subunit beta from Streptococcus pyogenes serotype M28 (strain MGAS6180).